Here is a 480-residue protein sequence, read N- to C-terminus: Protein nucleotidyltransferase YdiU (480 aa).

Residues glycine 87, glycine 89, arginine 90, lysine 110, aspartate 122, glycine 123, arginine 173, and arginine 180 each coordinate ATP. Aspartate 245 serves as the catalytic Proton acceptor. Mg(2+)-binding residues include asparagine 246 and aspartate 255. An ATP-binding site is contributed by aspartate 255.

This sequence belongs to the SELO family. Mg(2+) is required as a cofactor. It depends on Mn(2+) as a cofactor.

The enzyme catalyses L-seryl-[protein] + ATP = 3-O-(5'-adenylyl)-L-seryl-[protein] + diphosphate. It catalyses the reaction L-threonyl-[protein] + ATP = 3-O-(5'-adenylyl)-L-threonyl-[protein] + diphosphate. It carries out the reaction L-tyrosyl-[protein] + ATP = O-(5'-adenylyl)-L-tyrosyl-[protein] + diphosphate. The catalysed reaction is L-histidyl-[protein] + UTP = N(tele)-(5'-uridylyl)-L-histidyl-[protein] + diphosphate. The enzyme catalyses L-seryl-[protein] + UTP = O-(5'-uridylyl)-L-seryl-[protein] + diphosphate. It catalyses the reaction L-tyrosyl-[protein] + UTP = O-(5'-uridylyl)-L-tyrosyl-[protein] + diphosphate. Nucleotidyltransferase involved in the post-translational modification of proteins. It can catalyze the addition of adenosine monophosphate (AMP) or uridine monophosphate (UMP) to a protein, resulting in modifications known as AMPylation and UMPylation. The protein is Protein nucleotidyltransferase YdiU of Jannaschia sp. (strain CCS1).